Here is a 592-residue protein sequence, read N- to C-terminus: Membrane protein insertase YidC (592 aa).

A helical transmembrane segment spans residues 7-27 (NYFVAIALSVLILVAWQYFYV). The interval 38 to 74 (AEKAQQTQQVQPQQGGQQPAPGQALPGGAVPGESRDQ) is disordered. Residues 41–69 (AQQTQQVQPQQGGQQPAPGQALPGGAVPG) show a composition bias toward low complexity. 4 consecutive transmembrane segments (helical) span residues 367–387 (LFGN…LIFF), 441–461 (WPIL…YITI), 486–506 (LFGL…WPII), and 530–550 (FTWM…GLVI).

This sequence belongs to the OXA1/ALB3/YidC family. Type 1 subfamily. As to quaternary structure, interacts with the Sec translocase complex via SecD. Specifically interacts with transmembrane segments of nascent integral membrane proteins during membrane integration.

It localises to the cell inner membrane. Functionally, required for the insertion and/or proper folding and/or complex formation of integral membrane proteins into the membrane. Involved in integration of membrane proteins that insert both dependently and independently of the Sec translocase complex, as well as at least some lipoproteins. Aids folding of multispanning membrane proteins. This chain is Membrane protein insertase YidC, found in Sinorhizobium fredii (strain NBRC 101917 / NGR234).